Here is a 943-residue protein sequence, read N- to C-terminus: UvrABC system protein A (943 aa).

Gly-32–Ser-39 contributes to the ATP binding site. Residues Cys-251 to Cys-278 form a C4-type zinc finger. ABC transporter domains lie at Trp-308–Ile-589 and Gly-609–Lys-937. Position 641–648 (Gly-641–Ser-648) interacts with ATP. Residues Cys-740–Cys-766 form a C4-type zinc finger.

The protein belongs to the ABC transporter superfamily. UvrA family. Forms a heterotetramer with UvrB during the search for lesions.

Its subcellular location is the cytoplasm. Its function is as follows. The UvrABC repair system catalyzes the recognition and processing of DNA lesions. UvrA is an ATPase and a DNA-binding protein. A damage recognition complex composed of 2 UvrA and 2 UvrB subunits scans DNA for abnormalities. When the presence of a lesion has been verified by UvrB, the UvrA molecules dissociate. This Streptococcus pneumoniae serotype 4 (strain ATCC BAA-334 / TIGR4) protein is UvrABC system protein A.